The chain runs to 483 residues: ATP synthase subunit beta (483 aa).

169-176 (GGAGVGKT) is an ATP binding site.

This sequence belongs to the ATPase alpha/beta chains family. In terms of assembly, F-type ATPases have 2 components, CF(1) - the catalytic core - and CF(0) - the membrane proton channel. CF(1) has five subunits: alpha(3), beta(3), gamma(1), delta(1), epsilon(1). CF(0) has three main subunits: a(1), b(2) and c(9-12). The alpha and beta chains form an alternating ring which encloses part of the gamma chain. CF(1) is attached to CF(0) by a central stalk formed by the gamma and epsilon chains, while a peripheral stalk is formed by the delta and b chains.

The protein localises to the cell membrane. It carries out the reaction ATP + H2O + 4 H(+)(in) = ADP + phosphate + 5 H(+)(out). Its function is as follows. Produces ATP from ADP in the presence of a proton gradient across the membrane. The catalytic sites are hosted primarily by the beta subunits. The chain is ATP synthase subunit beta from Rhodococcus opacus (strain B4).